The primary structure comprises 395 residues: Type II restriction enzyme BsuFI (395 aa).

Homodimer. The cofactor is Mg(2+).

The enzyme catalyses Endonucleolytic cleavage of DNA to give specific double-stranded fragments with terminal 5'-phosphates.. In terms of biological role, a P subtype restriction enzyme that recognizes the double-stranded sequence 5'-CCGG-3' and cleaves after C-1. The protein is Type II restriction enzyme BsuFI (hsdFR) of Bacillus subtilis.